Consider the following 174-residue polypeptide: Peptide deformylase (174 aa).

Residues Cys94 and His136 each contribute to the Fe cation site. Glu137 is a catalytic residue. His140 lines the Fe cation pocket.

The protein belongs to the polypeptide deformylase family. Fe(2+) is required as a cofactor.

The enzyme catalyses N-terminal N-formyl-L-methionyl-[peptide] + H2O = N-terminal L-methionyl-[peptide] + formate. Removes the formyl group from the N-terminal Met of newly synthesized proteins. Requires at least a dipeptide for an efficient rate of reaction. N-terminal L-methionine is a prerequisite for activity but the enzyme has broad specificity at other positions. In Maricaulis maris (strain MCS10) (Caulobacter maris), this protein is Peptide deformylase.